We begin with the raw amino-acid sequence, 373 residues long: 4-hydroxy-3-methylbut-2-en-1-yl diphosphate synthase (flavodoxin) (373 aa).

[4Fe-4S] cluster contacts are provided by cysteine 270, cysteine 273, cysteine 305, and glutamate 312.

The protein belongs to the IspG family. [4Fe-4S] cluster serves as cofactor.

The enzyme catalyses (2E)-4-hydroxy-3-methylbut-2-enyl diphosphate + oxidized [flavodoxin] + H2O + 2 H(+) = 2-C-methyl-D-erythritol 2,4-cyclic diphosphate + reduced [flavodoxin]. It participates in isoprenoid biosynthesis; isopentenyl diphosphate biosynthesis via DXP pathway; isopentenyl diphosphate from 1-deoxy-D-xylulose 5-phosphate: step 5/6. In terms of biological role, converts 2C-methyl-D-erythritol 2,4-cyclodiphosphate (ME-2,4cPP) into 1-hydroxy-2-methyl-2-(E)-butenyl 4-diphosphate. The polypeptide is 4-hydroxy-3-methylbut-2-en-1-yl diphosphate synthase (flavodoxin) (Sodalis glossinidius (strain morsitans)).